The following is a 282-amino-acid chain: Aquaporin-6 (282 aa).

The Cytoplasmic segment spans residues 1-25 (MDAVEPGGRGWASMLACRLWKAISR). The helical transmembrane segment at 26-46 (ALFAEFLATGLYVFFGVGSVM) threads the bilayer. Topologically, residues 47–54 (RWPTALPS) are extracellular. The helical transmembrane segment at 55–73 (VLQIAITFNLVTAMAVQVT) threads the bilayer. Residues 74-78 (WKASG) are Cytoplasmic-facing. An intramembrane region (discontinuously helical) is located at residues 79–88 (AHANPAVTLA). The NPA 1 signature appears at 82–84 (NPA). Topologically, residues 89-99 (FLVGSHISLPR) are cytoplasmic. Residues 100–121 (AVAYVAAQLVGATVGAALLYGV) traverse the membrane as a helical segment. Residues 122–141 (MPGDIRETLGINVVRNSVST) lie on the Extracellular side of the membrane. The chain crosses the membrane as a helical span at residues 142 to 162 (GQAVAVELLLTLQLVLCVFAS). The Cytoplasmic segment spans residues 163-168 (TDSRQT). A helical membrane pass occupies residues 169–188 (SGSPATMIGISVALGHLIGI). Topologically, residues 189 to 192 (HFTG) are extracellular. The segment at residues 193-205 (CSMNPARSFGPAI) is an intramembrane region (discontinuously helical). Residues 196–198 (NPA) carry the NPA 2 motif. Residues 206–213 (IIGKFTVH) lie on the Extracellular side of the membrane. The helical transmembrane segment at 214-234 (WVFWVGPLMGALLASLIYNFV) threads the bilayer. At 235 to 282 (LFPDTKTLAQRLAILTGTVEVGTGAGAGAEPLKKESQPGSGAVEMESV) the chain is on the cytoplasmic side. The tract at residues 260 to 282 (GAGAEPLKKESQPGSGAVEMESV) is disordered.

Belongs to the MIP/aquaporin (TC 1.A.8) family. In terms of assembly, homotetramer; each monomer provides an independent solute pore.

Its subcellular location is the cytoplasmic vesicle membrane. It carries out the reaction nitrate(in) = nitrate(out). The enzyme catalyses iodide(out) = iodide(in). It catalyses the reaction bromide(in) = bromide(out). The catalysed reaction is chloride(in) = chloride(out). It carries out the reaction Na(+)(in) = Na(+)(out). The enzyme catalyses H2O(in) = H2O(out). It catalyses the reaction CO2(out) = CO2(in). The catalysed reaction is NH4(+)(in) = NH4(+)(out). In terms of biological role, aquaporins form homotetrameric transmembrane channels, with each monomer independently mediating water transport across the plasma membrane along its osmotic gradient. Unlike classical aquaporins, AQP6 is an intracellular channel with selective anion permeability, particularly for nitrate, and exhibits very low water permeability. It may also facilitate the transport of gases, such as CO2 and NH4(+), as demonstrated in vitro. The protein is Aquaporin-6 of Homo sapiens (Human).